Consider the following 437-residue polypeptide: GTPase Obg (437 aa).

The Obg domain maps to 2–160 (SLFLDTARIE…KILLLELRVL (159 aa)). In terms of domain architecture, OBG-type G spans 161–338 (ADVGLVGFPS…LLARTSELLA (178 aa)). GTP-binding positions include 167 to 174 (GFPSVGKS), 192 to 196 (FTTIT), 214 to 217 (DMPG), 284 to 287 (NKMD), and 319 to 321 (SGL). Positions 174 and 194 each coordinate Mg(2+). The OCT domain maps to 359–437 (GFEDEEKPFK…IQKFEFEFVD (79 aa)).

The protein belongs to the TRAFAC class OBG-HflX-like GTPase superfamily. OBG GTPase family. Monomer. It depends on Mg(2+) as a cofactor.

The protein resides in the cytoplasm. Its function is as follows. An essential GTPase which binds GTP, GDP and possibly (p)ppGpp with moderate affinity, with high nucleotide exchange rates and a fairly low GTP hydrolysis rate. Plays a role in control of the cell cycle, stress response, ribosome biogenesis and in those bacteria that undergo differentiation, in morphogenesis control. The protein is GTPase Obg of Lactococcus lactis subsp. cremoris (strain SK11).